Consider the following 460-residue polypeptide: Probable glucan endo-1,3-beta-glucosidase eglC (460 aa).

The N-terminal stretch at Met1–Ala18 is a signal peptide. Glu128 functions as the Proton donor in the catalytic mechanism. A glycan (N-linked (GlcNAc...) asparagine) is linked at Asn183. The active-site Nucleophile is the Glu239. Asn312, Asn367, and Asn373 each carry an N-linked (GlcNAc...) asparagine glycan. The disordered stretch occupies residues Arg379–Ser437. Positions Pro380–Ser437 are enriched in low complexity. Residue Ser430 is the site of GPI-anchor amidated serine attachment. A propeptide spans Ser431 to Leu460 (removed in mature form).

It belongs to the glycosyl hydrolase 17 family. In terms of processing, the GPI-anchor is attached to the protein in the endoplasmic reticulum and serves to target the protein to the cell surface. There, the glucosamine-inositol phospholipid moiety is cleaved off and the GPI-modified mannoprotein is covalently attached via its lipidless GPI glycan remnant to the 1,6-beta-glucan of the outer cell wall layer.

The protein resides in the cell membrane. Its subcellular location is the secreted. It localises to the cell wall. The enzyme catalyses Hydrolysis of (1-&gt;3)-beta-D-glucosidic linkages in (1-&gt;3)-beta-D-glucans.. In terms of biological role, glucanases play a role in cell expansion during growth, in cell-cell fusion during mating, and in spore release during sporulation. This enzyme may be involved in beta-glucan degradation and also function biosynthetically as a transglycosylase. This chain is Probable glucan endo-1,3-beta-glucosidase eglC (eglC), found in Aspergillus niger (strain ATCC MYA-4892 / CBS 513.88 / FGSC A1513).